The following is a 91-amino-acid chain: MPRSLKKGPFIDLHLLKKVEAAVEKNDKKPIKTWSRRSMIIPDMIGLTIAVHNGRQHVPVFVSDEMVGHKLGEFAPTRTYRGHVADKKAKR.

This sequence belongs to the universal ribosomal protein uS19 family.

Protein S19 forms a complex with S13 that binds strongly to the 16S ribosomal RNA. In Pseudoalteromonas atlantica (strain T6c / ATCC BAA-1087), this protein is Small ribosomal subunit protein uS19.